The following is a 48-amino-acid chain: Toxin CSTX-15 (48 aa).

4 cysteine pairs are disulfide-bonded: cysteine 3–cysteine 18, cysteine 10–cysteine 27, cysteine 17–cysteine 42, and cysteine 29–cysteine 40.

It belongs to the neurotoxin 19 (CSTX) family. 12 subfamily. In terms of assembly, heterodimer of A and B chains; disulfide-linked. In terms of processing, contains 4 disulfide bonds. As to expression, expressed by the venom gland.

The protein resides in the secreted. In Cupiennius salei (American wandering spider), this protein is Toxin CSTX-15.